A 687-amino-acid chain; its full sequence is RNA-binding protein VTS1 (687 aa).

The span at methionine 1–arginine 10 shows a compositional bias: basic residues. 3 disordered regions span residues methionine 1–alanine 115, alanine 248–glycine 341, and serine 526–alanine 598. The span at threonine 29–serine 41 shows a compositional bias: polar residues. The span at glycine 52–serine 68 shows a compositional bias: low complexity. Positions glycine 287–proline 301 are enriched in polar residues. Basic and acidic residues predominate over residues proline 305–serine 324. The span at serine 526 to leucine 539 shows a compositional bias: polar residues. Residues glutamine 550–glutamine 566 show a composition bias toward low complexity. The span at glutamine 585–valine 597 shows a compositional bias: gly residues. The region spanning lysine 606 to lysine 667 is the SAM domain.

This sequence belongs to the VTS1 family. Monomer. Binds to RNA.

Its subcellular location is the cytoplasm. It localises to the cytosol. It is found in the P-body. In terms of biological role, RNA-binding protein involved in post-transcriptional regulation through transcript degradation. The sequence is that of RNA-binding protein VTS1 from Cryptococcus neoformans var. grubii serotype A (strain H99 / ATCC 208821 / CBS 10515 / FGSC 9487) (Filobasidiella neoformans var. grubii).